Reading from the N-terminus, the 81-residue chain is Short neurotoxin 2 (81 aa).

An N-terminal signal peptide occupies residues 1-21 (MKTLLLTLVVVTIVCLDLGYT). Cystine bridges form between C24–C43, C38–C60, C62–C73, and C74–C79.

The protein belongs to the three-finger toxin family. Short-chain subfamily. Type I alpha-neurotoxin sub-subfamily. Expressed by the venom gland.

It is found in the secreted. Functionally, binds to muscle nicotinic acetylcholine receptor (nAChR) and inhibit acetylcholine from binding to the receptor, thereby impairing neuromuscular transmission. This Hydrophis peronii (Spiny-headed seasnake) protein is Short neurotoxin 2.